A 621-amino-acid chain; its full sequence is Chaperone protein HscA homolog (621 aa).

It belongs to the heat shock protein 70 family.

Its function is as follows. Chaperone involved in the maturation of iron-sulfur cluster-containing proteins. Has a low intrinsic ATPase activity which is markedly stimulated by HscB. The chain is Chaperone protein HscA homolog from Cupriavidus necator (strain ATCC 17699 / DSM 428 / KCTC 22496 / NCIMB 10442 / H16 / Stanier 337) (Ralstonia eutropha).